The sequence spans 113 residues: T cell receptor alpha variable 36/delta variable 7 (113 aa).

Positions Met1 to Ser21 are cleaved as a signal peptide. Residues Asp23–Glu113 form the Ig-like domain. N-linked (GlcNAc...) asparagine glycosylation is found at Asn43 and Asn96. Cys44 and Cys110 are joined by a disulfide.

As to quaternary structure, alpha-beta TR is a heterodimer composed of an alpha and beta chain; disulfide-linked. The alpha-beta TR is associated with the transmembrane signaling CD3 coreceptor proteins to form the TR-CD3 (TcR or TCR). The assembly of alpha-beta TR heterodimers with CD3 occurs in the endoplasmic reticulum where a single alpha-beta TR heterodimer associates with one CD3D-CD3E heterodimer, one CD3G-CD3E heterodimer and one CD247 homodimer forming a stable octameric structure. CD3D-CD3E and CD3G-CD3E heterodimers preferentially associate with TR alpha and TR beta chains, respectively. The association of the CD247 homodimer is the last step of TcR assembly in the endoplasmic reticulum and is required for transport to the cell surface.

The protein resides in the cell membrane. Functionally, v region of the variable domain of T cell receptor (TR) alpha chain that participates in the antigen recognition. Alpha-beta T cell receptors are antigen specific receptors which are essential to the immune response and are present on the cell surface of T lymphocytes. Recognize peptide-major histocompatibility (MH) (pMH) complexes that are displayed by antigen presenting cells (APC), a prerequisite for efficient T cell adaptive immunity against pathogens. Binding of alpha-beta TR to pMH complex initiates TR-CD3 clustering on the cell surface and intracellular activation of LCK that phosphorylates the ITAM motifs of CD3G, CD3D, CD3E and CD247 enabling the recruitment of ZAP70. In turn ZAP70 phosphorylates LAT, which recruits numerous signaling molecules to form the LAT signalosome. The LAT signalosome propagates signal branching to three major signaling pathways, the calcium, the mitogen-activated protein kinase (MAPK) kinase and the nuclear factor NF-kappa-B (NF-kB) pathways, leading to the mobilization of transcription factors that are critical for gene expression and essential for T cell growth and differentiation. The T cell repertoire is generated in the thymus, by V-(D)-J rearrangement. This repertoire is then shaped by intrathymic selection events to generate a peripheral T cell pool of self-MH restricted, non-autoaggressive T cells. Post-thymic interaction of alpha-beta TR with the pMH complexes shapes TR structural and functional avidity. The sequence is that of T cell receptor alpha variable 36/delta variable 7 from Homo sapiens (Human).